Reading from the N-terminus, the 80-residue chain is Small ribosomal subunit protein bS18 (80 aa).

It belongs to the bacterial ribosomal protein bS18 family. Part of the 30S ribosomal subunit. Forms a tight heterodimer with protein bS6.

Functionally, binds as a heterodimer with protein bS6 to the central domain of the 16S rRNA, where it helps stabilize the platform of the 30S subunit. This chain is Small ribosomal subunit protein bS18, found in Staphylococcus epidermidis (strain ATCC 35984 / DSM 28319 / BCRC 17069 / CCUG 31568 / BM 3577 / RP62A).